The chain runs to 527 residues: TnpB-like protein R854 (527 aa).

Over residues 21-36 the composition is skewed to basic residues; the sequence is GSKTKKKVFVKKKPPA. The segment at 21–50 is disordered; sequence GSKTKKKVFVKKKPPAKKPPDKKPLKKTTK. Zn(2+)-binding residues include Cys-481, Cys-484, Cys-498, and Cys-501.

It in the central section; belongs to the transposase 2 family. In the C-terminal section; belongs to the transposase 35 family.

This chain is TnpB-like protein R854, found in Acanthamoeba polyphaga mimivirus (APMV).